The sequence spans 2283 residues: DNA polymerase epsilon catalytic subunit A (2283 aa).

Residues 1–32 (MVLRNSGRRHPEPGADGEGSRDDGPSSSVSAL) are disordered. Residues 9–24 (RHPEPGADGEGSRDDG) show a composition bias toward basic and acidic residues. 3 positions are modified to phosphoserine: Ser-1184, Ser-1296, and Ser-1316. 2 disordered regions span residues 1935–1968 (GQVK…GESE) and 2014–2041 (HSAP…TGSL). Residues 1936-1946 (QVKEQDSQARE) are compositionally biased toward basic and acidic residues. Acidic residues predominate over residues 1947–1968 (ETDEEEEDKEKDEEEEGMGESE). A compositionally biased stretch (polar residues) spans 2028 to 2037 (SQFSQESEGA). Zn(2+) contacts are provided by Cys-2155, Cys-2158, Cys-2184, and Cys-2187. Residues 2155–2187 (CHSCNFCRDLDLCKDSSFSQDGAILPQWLCSNC) form a CysA-type zinc finger. Residues Cys-2218, Cys-2221, Cys-2233, and Cys-2235 each contribute to the [4Fe-4S] cluster site. The CysB motif signature appears at 2218 to 2235 (CLKCRGMKETHMPVYCSC).

Belongs to the DNA polymerase type-B family. Component of the DNA polymerase epsilon complex consisting of four subunits: the catalytic subunit POLE and the accessory subunits POLE2, POLE3 and POLE4. Interacts with RAD17 and TOPBP1. The cofactor is [4Fe-4S] cluster.

It is found in the nucleus. The catalysed reaction is DNA(n) + a 2'-deoxyribonucleoside 5'-triphosphate = DNA(n+1) + diphosphate. Its function is as follows. Catalytic component of the DNA polymerase epsilon complex. Participates in chromosomal DNA replication. Required during synthesis of the leading DNA strands at the replication fork and binds at/or near replication origins and moves along DNA with the replication fork. Has 3'-5' proofreading exonuclease activity that corrects errors arising during DNA replication. It is also involved in DNA synthesis during DNA repair. This Mus musculus (Mouse) protein is DNA polymerase epsilon catalytic subunit A (Pole).